Here is a 61-residue protein sequence, read N- to C-terminus: Small ribosomal subunit protein uS14 (61 aa).

Zn(2+)-binding residues include C24, C27, C40, and C43.

It belongs to the universal ribosomal protein uS14 family. Zinc-binding uS14 subfamily. In terms of assembly, part of the 30S ribosomal subunit. Contacts proteins S3 and S10. The cofactor is Zn(2+).

In terms of biological role, binds 16S rRNA, required for the assembly of 30S particles and may also be responsible for determining the conformation of the 16S rRNA at the A site. The polypeptide is Small ribosomal subunit protein uS14 (Streptococcus mutans serotype c (strain ATCC 700610 / UA159)).